A 295-amino-acid chain; its full sequence is Putative F-box protein At5g44220 (295 aa).

An F-box domain is found at 56-102; it reads STNSDLLPMDLIKEILKRLPAKTLARFLCVSKLWSSIIRSRDLMKLF.

The protein is Putative F-box protein At5g44220 of Arabidopsis thaliana (Mouse-ear cress).